The sequence spans 276 residues: Small ribosomal subunit protein uS2 (276 aa).

The protein belongs to the universal ribosomal protein uS2 family.

The sequence is that of Small ribosomal subunit protein uS2 from Chlamydia caviae (strain ATCC VR-813 / DSM 19441 / 03DC25 / GPIC) (Chlamydophila caviae).